We begin with the raw amino-acid sequence, 288 residues long: T-lymphocyte activation antigen CD80 (288 aa).

The first 34 residues, 1 to 34 (MGHTRRQGTSPSKCPYLNFFQLLVLAGLSHFCSG), serve as a signal peptide directing secretion. An Ig-like V-type domain is found at 35–135 (VIHVTKEVKE…FKREHLAEVT (101 aa)). The Extracellular segment spans residues 35–242 (VIHVTKEVKE…TTKQEHFPDN (208 aa)). Cystine bridges form between Cys-50-Cys-116 and Cys-162-Cys-216. 8 N-linked (GlcNAc...) asparagine glycosylation sites follow: Asn-53, Asn-89, Asn-98, Asn-186, Asn-207, Asn-211, Asn-226, and Asn-232. The 86-residue stretch at 145 to 230 (PSISDFEIPT…GHLRVNQTFN (86 aa)) folds into the Ig-like C2-type domain. A helical transmembrane segment spans residues 243 to 263 (LLPSWAITLISVNGIFVICCL). Residues Cys-261, Cys-262, Cys-266, and Cys-271 are each lipidated (S-palmitoyl cysteine). Residues 264–288 (TYCFAPRCRERRRNERLRRESVRPV) lie on the Cytoplasmic side of the membrane. Phosphoserine is present on Ser-284.

Homodimer. Interacts with CTLA4; this interaction inhibits T-cell activation. Interacts with PDL1/CD274; this interaction blocks PDL1/PDCD1 binding and thus PDL1/CD274 inhibitory function. Interacts with CD28. In terms of assembly, (Microbial infection) Interacts with adenovirus subgroup B fiber proteins. As to quaternary structure, (Microbial infection) Interacts with Orthopoxvirus OPG038/M2 protein, inhibiting the interaction with CTLA4/CD152. Post-translationally, palmitoylated by ZDHHC20; palmitoylation protects CD80 from ubiquitin-mediated degradation, regulating the protein stability, and ensures its accurate plasma membrane localization. Expressed on activated B-cells, macrophages and dendritic cells.

The protein localises to the cell membrane. Costimulatory molecule that belongs to the immunoglobulin superfamily that plays an important role in T-lymphocyte activation. Acts as the primary auxiliary signal augmenting the MHC/TCR signal in naive T-cells together with the CD28 receptor which is constitutively expressed on the cell surface of T-cells. In turn, activates different signaling pathways such as NF-kappa-B or MAPK leading to the production of different cytokines. In addition, CD28/CD80 costimulatory signal stimulates glucose metabolism and ATP synthesis of T-cells by activating the PI3K/Akt signaling pathway. Also acts as a regulator of PDL1/PDCD1 interactions to limit excess engagement of PDL1 and its inhibitory role in immune responses. Expressed on B-cells, plays a critical role in regulating interactions between B-cells and T-cells in both early and late germinal center responses, which are crucial for the generation of effective humoral immune responses. Its function is as follows. (Microbial infection) Acts as a receptor for adenovirus subgroup B. This Homo sapiens (Human) protein is T-lymphocyte activation antigen CD80 (CD80).